The sequence spans 860 residues: MGVSGSKGQKLFVSVLQRLLSERGLHVKESSAIEFYQFLIKVSPWFPEEGGLNLQDWKRVGREMKRYAAEHGTDSIPKQAYPIWLQLREILTEQSDLVLLSAEAKSVTEEELEEGLTGLLSTSSQEKTYGTRGTAYAEIDTEVDKLSEHIYDEPYEEKEKADKNEEKDHVRKIKKVVQRKENSEGKRKEKDSKAFLATDWNDDDLSPEDWDDLEEQAAHYHDDDELILPVKRKVVKKKPQALRRKPLPPVGFAGAMAEAREKGDLTFTFPVVFMGESDEDDTPVWEPLPLKTLKELQSAVRTMGPSAPYTLQVVDMVASQWLTPSDWHQTARATLSPGDYVLWRTEYEEKSKEMVQKAAGKRKGKVSLDMLLGTGQFLSPSSQIKLSKDVLKDVTTNAVLAWRAIPPPGVKKTVLAGLKQGNEESYETFISRLEEAVYRMMPRGEGSDILIKQLAWENANSLCQDLIRPIRKTGTIQDYIRACLDASPAVVQGMAYAAAMRGQKYSTFVKQTYGGGKGGQGAEGPVCFSCGKTGHIRKDCKDEKGSKRAPPGLCPRCKKGYHWKSECKSKFDKDGNPLPPLETNAENSKNLVKGQSPSPAQKGDGVKGSGLNPEAPPFTIHDLPRGTPGSAGLDLSSQKDLILSLEDGVSLVPTLVKGTLPEGTTGLIIGRSSNYKKGLEVLPGVIDSDFQGEIKVMVKAAKNAVIIHKGERIAQLLLLPYLKLPNPVIKEERGSEGFGSTSHVHWVQEISDSRPMLHIYLNGRRFLGLLDTGADKTCIAGRDWPANWPIHQTESSLQGLGMACGVARSSQPLRWQHEDKSGIIHPFVIPTLPFTLWGRDIMKDIKVRLMTDSPDDSQDL.

A lipid anchor (N-myristoyl glycine; by host) is attached at Gly-2. Basic and acidic residues-rich tracts occupy residues Tyr-151–His-169 and Gln-178–Asp-191. Residues Tyr-151 to Asp-191 are disordered. Residues Pro-305–Pro-308 carry the PTAP/PSAP motif motif. 2 CCHC-type zinc fingers span residues Pro-525–Asp-542 and Gly-552–Ser-569. Residues Asp-572–Ala-631 are disordered. A compositionally biased stretch (polar residues) spans Asn-584–Pro-599. In terms of domain architecture, Peptidase A2 spans Phe-766–Ile-841. Asp-771 (protease; shared with dimeric partner) is an active-site residue.

Homodimer; when myristoylated. As to quaternary structure, homodimer. In terms of assembly, NC-dUTPase is a homotrimer. Released by autocatalytic processing. In terms of processing, myristoylated. Myristoylation of the matrix (MA) domain mediates the transport and binding of Gag polyproteins to the host plasma membrane and is required for the assembly of viral particles. Post-translationally, specific enzymatic cleavages in vivo yield mature proteins.

The protein localises to the virion. It catalyses the reaction dUTP + H2O = dUMP + diphosphate + H(+). Its activity is regulated as follows. Inhibited by pepstatin A. Matrix protein. Functionally, nucleocapsid protein p14: Binds strongly to viral nucleic acids and promote their aggregation. Also destabilizes the nucleic acids duplexes via highly structured zinc-binding motifs. In terms of biological role, capsid protein. Its function is as follows. The aspartyl protease mediates proteolytic cleavages of Gag and Gag-Pol polyproteins during or shortly after the release of the virion from the plasma membrane. Cleavages take place as an ordered, step-wise cascade to yield mature proteins. This process is called maturation. Displays maximal activity during the budding process just prior to particle release from the cell. This chain is Gag-Pro polyprotein (gag-pro), found in Mouse mammary tumor virus (strain BR6) (MMTV).